A 298-amino-acid chain; its full sequence is Tyrosine recombinase XerC (298 aa).

The Core-binding (CB) domain maps to 1–84; it reads MNHIQDAFLN…TLRTFYEYWM (84 aa). Residues 105–286 enclose the Tyr recombinase domain; it reads YLPQFFYEEE…SNQQLRKVYL (182 aa). Catalysis depends on residues Arg-145, Lys-169, His-238, Arg-241, and His-264. Tyr-273 acts as the O-(3'-phospho-DNA)-tyrosine intermediate in catalysis.

The protein belongs to the 'phage' integrase family. XerC subfamily. Forms a cyclic heterotetrameric complex composed of two molecules of XerC and two molecules of XerD.

Its subcellular location is the cytoplasm. Functionally, site-specific tyrosine recombinase, which acts by catalyzing the cutting and rejoining of the recombining DNA molecules. The XerC-XerD complex is essential to convert dimers of the bacterial chromosome into monomers to permit their segregation at cell division. It also contributes to the segregational stability of plasmids. In Staphylococcus aureus (strain USA300), this protein is Tyrosine recombinase XerC.